The following is a 143-amino-acid chain: MTIERTFSIVKPNAVAKNVIGAIFSRFESAGFKIVGSKMLHLSKEQAEGFYAEHQGKPFFDGLVEFMTSGPVVVSVLEGDNAVQRHRDLMGATNPANALAGTLRADYADSFTENATHGSDSAESAAREIAYFFGEGEICPRTR.

Lys11, Phe59, Arg87, Thr93, Arg104, and Asn114 together coordinate ATP. His117 (pros-phosphohistidine intermediate) is an active-site residue.

The protein belongs to the NDK family. Homotetramer. It depends on Mg(2+) as a cofactor.

Its subcellular location is the cytoplasm. The enzyme catalyses a 2'-deoxyribonucleoside 5'-diphosphate + ATP = a 2'-deoxyribonucleoside 5'-triphosphate + ADP. It carries out the reaction a ribonucleoside 5'-diphosphate + ATP = a ribonucleoside 5'-triphosphate + ADP. Major role in the synthesis of nucleoside triphosphates other than ATP. The ATP gamma phosphate is transferred to the NDP beta phosphate via a ping-pong mechanism, using a phosphorylated active-site intermediate. This is Nucleoside diphosphate kinase from Erwinia tasmaniensis (strain DSM 17950 / CFBP 7177 / CIP 109463 / NCPPB 4357 / Et1/99).